Reading from the N-terminus, the 107-residue chain is UPF0473 protein LACR_0139 (107 aa).

Belongs to the UPF0473 family.

This is UPF0473 protein LACR_0139 from Lactococcus lactis subsp. cremoris (strain SK11).